Consider the following 506-residue polypeptide: Maturase K (506 aa).

The protein belongs to the intron maturase 2 family. MatK subfamily.

The protein localises to the plastid. It localises to the chloroplast. Its function is as follows. Usually encoded in the trnK tRNA gene intron. Probably assists in splicing its own and other chloroplast group II introns. This chain is Maturase K, found in Sullivantia sullivantii (Sullivant's coolwort).